We begin with the raw amino-acid sequence, 363 residues long: MHKNKILVPLSNNSYEVIIKQGLINNIGEELIRIGINSNRKILIVSNKEISTLFGRKLLNNLKKNNFNAEIFNIKAGESHKNFASLSEIFNAAFEVGLDRNSLLIALGGGIVGDVTGFAAATWLRGIEYIQIPTTLLSMVDSSVGGKTAVNHPKGKNLIGAFYQPKAVFIDPETLITLPTREFKAGMAEVIKYGVIKDKSLFEYLENEKNRDKILNLENESLIKIINKSIKTKACIVSEDEKENGIRAILNYGHSFGHVIENLCGYGEYLHGEAISIGMKIAGDIATEKNLWSKEHSLRQDHLIESYGLPIQTPKIKKNDVMKILMGDKKVRNGKMRFILPIELGEVDIFNDINESQFLKYFN.

NAD(+) contacts are provided by residues 134 to 135 (TT), Lys147, Lys156, and 174 to 177 (TLIT). Zn(2+) is bound by residues Glu189, His254, and His271.

Belongs to the sugar phosphate cyclases superfamily. Dehydroquinate synthase family. The cofactor is NAD(+). Co(2+) is required as a cofactor. Requires Zn(2+) as cofactor.

The protein localises to the cytoplasm. The catalysed reaction is 7-phospho-2-dehydro-3-deoxy-D-arabino-heptonate = 3-dehydroquinate + phosphate. It participates in metabolic intermediate biosynthesis; chorismate biosynthesis; chorismate from D-erythrose 4-phosphate and phosphoenolpyruvate: step 2/7. Its function is as follows. Catalyzes the conversion of 3-deoxy-D-arabino-heptulosonate 7-phosphate (DAHP) to dehydroquinate (DHQ). The chain is 3-dehydroquinate synthase from Prochlorococcus marinus subsp. pastoris (strain CCMP1986 / NIES-2087 / MED4).